The primary structure comprises 549 residues: Oxygen-dependent choline dehydrogenase (549 aa).

4 to 33 (DYIIIGSGSAGSALAHRLSEDSRNSVIVLE) is an FAD binding site. His465 functions as the Proton acceptor in the catalytic mechanism.

This sequence belongs to the GMC oxidoreductase family. FAD serves as cofactor.

The enzyme catalyses choline + A = betaine aldehyde + AH2. It catalyses the reaction betaine aldehyde + NAD(+) + H2O = glycine betaine + NADH + 2 H(+). The protein operates within amine and polyamine biosynthesis; betaine biosynthesis via choline pathway; betaine aldehyde from choline (cytochrome c reductase route): step 1/1. Involved in the biosynthesis of the osmoprotectant glycine betaine. Catalyzes the oxidation of choline to betaine aldehyde and betaine aldehyde to glycine betaine at the same rate. The polypeptide is Oxygen-dependent choline dehydrogenase (Sinorhizobium fredii (strain NBRC 101917 / NGR234)).